Reading from the N-terminus, the 198-residue chain is Peptidyl-tRNA hydrolase (198 aa).

Tyr15 contacts tRNA. The active-site Proton acceptor is the His20. Phe66, Asn68, and Asn114 together coordinate tRNA.

Belongs to the PTH family. Monomer.

It is found in the cytoplasm. It catalyses the reaction an N-acyl-L-alpha-aminoacyl-tRNA + H2O = an N-acyl-L-amino acid + a tRNA + H(+). Hydrolyzes ribosome-free peptidyl-tRNAs (with 1 or more amino acids incorporated), which drop off the ribosome during protein synthesis, or as a result of ribosome stalling. In terms of biological role, catalyzes the release of premature peptidyl moieties from peptidyl-tRNA molecules trapped in stalled 50S ribosomal subunits, and thus maintains levels of free tRNAs and 50S ribosomes. This is Peptidyl-tRNA hydrolase from Cupriavidus necator (strain ATCC 17699 / DSM 428 / KCTC 22496 / NCIMB 10442 / H16 / Stanier 337) (Ralstonia eutropha).